A 447-amino-acid polypeptide reads, in one-letter code: NADH-ubiquinone oxidoreductase chain 4 (447 aa).

The next 13 helical transmembrane spans lie at 4 to 24 (LLLLIMLNMLMMSMIYLFMLF), 34 to 54 (LIIGNLIIINLLLNLFNLNWI), 67 to 87 (MYSYGLIMLTLWIFGLIFISL), 100 to 120 (LLMISLLLVFLSMNLLLFYLF), 149 to 169 (MFYTMIFSLPMLYIIYYIYLI), 189 to 209 (LFIYLLMSFLVKIPIYLFHGW), 223 to 243 (MILASIMLKLGGYGMLRLMII), 248 to 268 (FILIQKILVMINSFGVLILSL), 279 to 299 (IIAISSIVHMGLMIMSMMTFL), 304 to 324 (IGGYLMMISHGLSSSGLFFLV), 349 to 371 (MSLLWFMLCSSNMGSPVSLNLIS), 388 to 408 (LILMMYCLFSFIYSIYLFMFI), and 422 to 442 (GILVEYFVLLLHWIPLNLMFL).

The protein belongs to the complex I subunit 4 family.

The protein localises to the mitochondrion membrane. It catalyses the reaction a ubiquinone + NADH + 5 H(+)(in) = a ubiquinol + NAD(+) + 4 H(+)(out). Core subunit of the mitochondrial membrane respiratory chain NADH dehydrogenase (Complex I) that is believed to belong to the minimal assembly required for catalysis. Complex I functions in the transfer of electrons from NADH to the respiratory chain. The immediate electron acceptor for the enzyme is believed to be ubiquinone. This is NADH-ubiquinone oxidoreductase chain 4 (ND4) from Apis mellifera ligustica (Common honeybee).